The primary structure comprises 124 residues: UPF0102 protein BL0935 (124 aa).

It belongs to the UPF0102 family.

This Bifidobacterium longum (strain NCC 2705) protein is UPF0102 protein BL0935.